The following is a 256-amino-acid chain: Capsid protein (256 aa).

The Bipartite nuclear localization signal motif lies at 3 to 20 (KRPADIIISTPGSKVRRR). The short motif at 40-54 (KRQSWTNRPINRKPR) is the Nuclear localization signal element. A zinc finger lies at 68–85 (CEGPCKVQSFESRHDVVH). The Nuclear export signal signature appears at 101 to 122 (LTHRVGKRFCVKSIYILGKIWM). Positions 200 to 247 (RRFFRVNNYVVYNQQEAGKYENHTENALMLYMACTHASNPVYATLKIR) match the Bipartite nuclear localization signal motif.

The protein belongs to the geminiviridae capsid protein family. In terms of assembly, homomultimer. Binds to single-stranded and double-stranded viral DNA. Interacts (via nuclear localization signals) with host importin alpha-1a.

The protein localises to the virion. It is found in the host nucleus. Functionally, encapsidates the viral DNA into characteristic twinned ('geminate') particles. Binds the genomic viral ssDNA and shuttles it into and out of the cell nucleus. The CP of bipartite geminiviruses is not required for cell-to-cell or systemic movement. The protein is Capsid protein of Manihot esculenta (Cassava).